A 307-amino-acid polypeptide reads, in one-letter code: Elongation factor Ts (307 aa).

An involved in Mg(2+) ion dislocation from EF-Tu region spans residues 80 to 83 (TDFV).

It belongs to the EF-Ts family.

It localises to the cytoplasm. Associates with the EF-Tu.GDP complex and induces the exchange of GDP to GTP. It remains bound to the aminoacyl-tRNA.EF-Tu.GTP complex up to the GTP hydrolysis stage on the ribosome. The chain is Elongation factor Ts from Rhodospirillum centenum (strain ATCC 51521 / SW).